The chain runs to 493 residues: Rho guanine nucleotide exchange factor 9 (493 aa).

Positions D15 to N74 constitute an SH3 domain. Residues R107–E117 are interaction with GPHN. A DH domain is found at M110–R294. The PH domain occupies E325–K432. The interval A453–S473 is disordered.

In terms of assembly, interacts with GPHN. Detected in brain, throughout the gray matter. Detected at low levels in heart and skeletal muscle.

It is found in the cytoplasm. The protein localises to the postsynaptic density. Functionally, acts as a guanine nucleotide exchange factor (GEF) for CDC42. Promotes formation of GPHN clusters. The protein is Rho guanine nucleotide exchange factor 9 (Arhgef9) of Rattus norvegicus (Rat).